A 366-amino-acid chain; its full sequence is Phospho-N-acetylmuramoyl-pentapeptide-transferase (366 aa).

A run of 10 helical transmembrane segments spans residues 3–23 (QIFIAGAVAFLVSVFLTPVLI), 54–74 (GIAVLAGIVFGYLIAVLVGLV), 80–100 (PGVSGWLVLGLTLALGGLGFA), 120–140 (LVGQLVTAIVFGLLILQFPNA), 161–181 (IAIGPAIVGMILFLIFIYLVI), 197–217 (LASGVTAIVMGTYVLITFWQF), 238–258 (LSMLASAGLGACLGFLWWNAA), 262–282 (IFMGDTGSLALGGLVAGLSVT), 288–308 (LMILVGIIFVIEAASVVIQVV), and 341–361 (FWLLAALAAMSGFAVFYAEWL).

Belongs to the glycosyltransferase 4 family. MraY subfamily. It depends on Mg(2+) as a cofactor.

The protein resides in the cell membrane. It catalyses the reaction UDP-N-acetyl-alpha-D-muramoyl-L-alanyl-gamma-D-glutamyl-meso-2,6-diaminopimeloyl-D-alanyl-D-alanine + di-trans,octa-cis-undecaprenyl phosphate = di-trans,octa-cis-undecaprenyl diphospho-N-acetyl-alpha-D-muramoyl-L-alanyl-D-glutamyl-meso-2,6-diaminopimeloyl-D-alanyl-D-alanine + UMP. It participates in cell wall biogenesis; peptidoglycan biosynthesis. In terms of biological role, catalyzes the initial step of the lipid cycle reactions in the biosynthesis of the cell wall peptidoglycan: transfers peptidoglycan precursor phospho-MurNAc-pentapeptide from UDP-MurNAc-pentapeptide onto the lipid carrier undecaprenyl phosphate, yielding undecaprenyl-pyrophosphoryl-MurNAc-pentapeptide, known as lipid I. In Corynebacterium jeikeium (strain K411), this protein is Phospho-N-acetylmuramoyl-pentapeptide-transferase.